A 670-amino-acid chain; its full sequence is Probable metal-nicotianamine transporter YSL4 (670 aa).

13 helical membrane passes run 35–55 (ITIR…IITH), 59–79 (LTIG…FFFI), 107–127 (CVVS…LIAM), 151–171 (GLWW…FCLV), 273–293 (LVNC…WPFI), 318–338 (VFIA…KIIV), 389–409 (FAVS…PLIF), 416–436 (FVLC…YGAG), 450–470 (GLFI…GLAA), 507–527 (LGTA…WTAF), 559–579 (PKHC…VNLI), 601–621 (FYIG…MLVW), and 636–656 (VASG…ILSI).

The protein belongs to the YSL (TC 2.A.67.2) family.

Its subcellular location is the membrane. In terms of biological role, may be involved in the transport of nicotianamine-chelated metals. The polypeptide is Probable metal-nicotianamine transporter YSL4 (YSL4) (Arabidopsis thaliana (Mouse-ear cress)).